Here is a 257-residue protein sequence, read N- to C-terminus: Diacetyl reductase [(S)-acetoin forming] (257 aa).

NAD(+) is bound at residue 6–30 (IITGSAGGLGKGIAERLANDGFNIV). Position 139 (serine 139) interacts with substrate. The active-site Proton acceptor is the tyrosine 152. The active site involves lysine 156.

It belongs to the short-chain dehydrogenases/reductases (SDR) family.

The catalysed reaction is (S)-acetoin + NAD(+) = diacetyl + NADH + H(+). Functionally, catalyzes the irreversible reduction of 2,3-butanediol to (S)-acetoin in the presence of NADH. In Staphylococcus epidermidis (strain ATCC 35984 / DSM 28319 / BCRC 17069 / CCUG 31568 / BM 3577 / RP62A), this protein is Diacetyl reductase [(S)-acetoin forming] (butA).